Here is a 603-residue protein sequence, read N- to C-terminus: MPVRQLPETVVNRIAAGEVVERPASVVKELVENAIDAGATRIDVFTDGGGRRRIGVTDDGAGMAKGDLALAVDRHATSKLDDEDLLGIRTLGFRGEALPSIGAVARLCITTREAREPHAWSLTVEGGRKSEIIPAALTNGTRVEVGDLFYATPARLKFLKTDRTEAEAIREVVRRLAMARPDIGFTLAGEERAPVTWTAALPGAAGRLTRLGDILGGDFRAAAIPVRAEREGVIVEGFAAAPSLTRANALGQYLFVNGRPVRDKLILGAVRAAYSDYLPRDRHPVAALFVTADPREVDANVHPAKTEVRFRNAGLVRALIVHALKEGLAREGRRTAANRDGAVLTAFRPAPSPRPANWDWRESPAAPADARPWIGGPPAAAFAEAGQAALDVGAPSADVRFDAHPPLDLVDRPLGAARTQIHETYIVSQTRDGLIVVDQHAAHERIVYERLKTALARDGVQRQILLIPDIVELDEATVEKLIDRATELEKFGLAIESFGPGAVAVRETPSLLGKINAAALLRDLAEHMTEWEETLPLERRLMHVAATMACHGSVRAGRILKPEEMNALLREMEATPNSGQCNHGRPTYVELKLDDIEKLFGRR.

The protein belongs to the DNA mismatch repair MutL/HexB family.

Its function is as follows. This protein is involved in the repair of mismatches in DNA. It is required for dam-dependent methyl-directed DNA mismatch repair. May act as a 'molecular matchmaker', a protein that promotes the formation of a stable complex between two or more DNA-binding proteins in an ATP-dependent manner without itself being part of a final effector complex. The protein is DNA mismatch repair protein MutL of Nitrobacter winogradskyi (strain ATCC 25391 / DSM 10237 / CIP 104748 / NCIMB 11846 / Nb-255).